We begin with the raw amino-acid sequence, 507 residues long: Probable malate:quinone oxidoreductase 2 (507 aa).

Belongs to the MQO family. FAD is required as a cofactor.

It catalyses the reaction (S)-malate + a quinone = a quinol + oxaloacetate. It participates in carbohydrate metabolism; tricarboxylic acid cycle; oxaloacetate from (S)-malate (quinone route): step 1/1. The protein is Probable malate:quinone oxidoreductase 2 of Pseudomonas aeruginosa (strain ATCC 15692 / DSM 22644 / CIP 104116 / JCM 14847 / LMG 12228 / 1C / PRS 101 / PAO1).